The chain runs to 259 residues: 4-hydroxy-tetrahydrodipicolinate reductase (259 aa).

NAD(+) contacts are provided by residues 9-14 (GAGGRM) and E35. R36 provides a ligand contact to NADP(+). NAD(+)-binding positions include 92-94 (GTT) and 116-119 (APNM). The Proton donor/acceptor role is filled by H149. Residue H150 coordinates (S)-2,3,4,5-tetrahydrodipicolinate. K153 functions as the Proton donor in the catalytic mechanism. Position 159–160 (159–160 (GT)) interacts with (S)-2,3,4,5-tetrahydrodipicolinate.

This sequence belongs to the DapB family.

Its subcellular location is the cytoplasm. It catalyses the reaction (S)-2,3,4,5-tetrahydrodipicolinate + NAD(+) + H2O = (2S,4S)-4-hydroxy-2,3,4,5-tetrahydrodipicolinate + NADH + H(+). The enzyme catalyses (S)-2,3,4,5-tetrahydrodipicolinate + NADP(+) + H2O = (2S,4S)-4-hydroxy-2,3,4,5-tetrahydrodipicolinate + NADPH + H(+). It functions in the pathway amino-acid biosynthesis; L-lysine biosynthesis via DAP pathway; (S)-tetrahydrodipicolinate from L-aspartate: step 4/4. Its function is as follows. Catalyzes the conversion of 4-hydroxy-tetrahydrodipicolinate (HTPA) to tetrahydrodipicolinate. This Oleidesulfovibrio alaskensis (strain ATCC BAA-1058 / DSM 17464 / G20) (Desulfovibrio alaskensis) protein is 4-hydroxy-tetrahydrodipicolinate reductase.